Reading from the N-terminus, the 463-residue chain is Aurantioclavine synthase cnsA (463 aa).

In terms of domain architecture, FAD-binding PCMH-type spans 16–199; it reads ERFNQRGNVF…TQATVRVFPD (184 aa).

The protein belongs to the oxygen-dependent FAD-linked oxidoreductase family. Requires FAD as cofactor.

It participates in alkaloid biosynthesis. Functionally, FAD-linked oxidoreductase; part of the gene cluster that mediates the biosynthesis of communesins, a prominent class of indole alkaloids with great potential as pharmaceuticals. Communesins are biosynthesized by the coupling of tryptamine and aurantioclavine, two building blocks derived from L-tryptophan. The L-tryptophan decarboxylase cnsB converts L-tryptophan to tryptamine, whereas the tryptophan dimethylallyltransferase cnsF converts L-tryptophan to 4-dimethylallyl tryptophan which is further transformed to aurantioclavine by the aurantioclavine synthase cnsA, probably aided by the catalase cnsD. The cytochrome P450 monooxygenase cnsC catalyzes the heterodimeric coupling between the two different indole moieties, tryptamine and aurantioclavine, to construct vicinal quaternary stereocenters and yield the heptacyclic communesin scaffold. The O-methyltransferase cnsE then methylates the communesin scaffold to produce communesin K, the simplest characterized communesin that contains the heptacyclic core. The dioxygenase cnsJ converts communesin K into communesin I. Acylation to introduce the hexadienyl group at position N16 of communesin I by the acyltransferase cnsK leads to the production of communesin B. The hexadienyl group is produced by the highly reducing polyketide synthase cnsI, before being hydrolytically removed from cnsI by the serine hydrolase cnsH, converted into hexadienyl-CoA by the CoA ligase cnsG, and then transferred to communesin I by cnsK. Surprisingly, cnsK may also be a promiscuous acyltransferase that can tolerate a range of acyl groups, including acetyl-, propionyl-, and butyryl-CoA, which lead to communesins A, G and H respectively. The roles of the alpha-ketoglutarate-dependent dioxygenases cnsM and cnsP have still to be determined. The polypeptide is Aurantioclavine synthase cnsA (Penicillium expansum (Blue mold rot fungus)).